Here is a 171-residue protein sequence, read N- to C-terminus: MGKASANNVKSDKEAAKPAAKKDENKDFQYIVRIANKDLNGERPIPLALSDLKGIGLRLGYAIAERLNLQPTKKIGELKEDEIEKLKEYVENKEYDLPDWLLNHRREPVTGKNLNLVTTDLDVQVQEDINLMKKIRSYKGIRHEKGKKVRGQRTRSNGRRGLSIGVVRKKE.

2 disordered regions span residues 1–22 (MGKASANNVKSDKEAAKPAAKK) and 142–171 (RHEKGKKVRGQRTRSNGRRGLSIGVVRKKE). Over residues 10–22 (KSDKEAAKPAAKK) the composition is skewed to basic and acidic residues. The span at 142–158 (RHEKGKKVRGQRTRSNG) shows a compositional bias: basic residues.

This sequence belongs to the universal ribosomal protein uS13 family. In terms of assembly, part of the 30S ribosomal subunit. Forms a loose heterodimer with protein S19. Forms two bridges to the 50S subunit in the 70S ribosome.

Functionally, located at the top of the head of the 30S subunit, it contacts several helices of the 16S rRNA. In the 70S ribosome it contacts the 23S rRNA (bridge B1a) and protein L5 of the 50S subunit (bridge B1b), connecting the 2 subunits; these bridges are implicated in subunit movement. The protein is Small ribosomal subunit protein uS13 of Thermoplasma volcanium (strain ATCC 51530 / DSM 4299 / JCM 9571 / NBRC 15438 / GSS1).